A 388-amino-acid polypeptide reads, in one-letter code: Methylthioribose-1-phosphate isomerase (388 aa).

Residue Asp-253 is the Proton donor of the active site.

It belongs to the eIF-2B alpha/beta/delta subunits family. MtnA subfamily.

Its subcellular location is the cytoplasm. The protein resides in the nucleus. It carries out the reaction 5-(methylsulfanyl)-alpha-D-ribose 1-phosphate = 5-(methylsulfanyl)-D-ribulose 1-phosphate. The protein operates within amino-acid biosynthesis; L-methionine biosynthesis via salvage pathway; L-methionine from S-methyl-5-thio-alpha-D-ribose 1-phosphate: step 1/6. Catalyzes the interconversion of methylthioribose-1-phosphate (MTR-1-P) into methylthioribulose-1-phosphate (MTRu-1-P). This Fusarium vanettenii (strain ATCC MYA-4622 / CBS 123669 / FGSC 9596 / NRRL 45880 / 77-13-4) (Fusarium solani subsp. pisi) protein is Methylthioribose-1-phosphate isomerase.